Consider the following 115-residue polypeptide: Phosphoribosyl-AMP cyclohydrolase (115 aa).

Residue D80 participates in Mg(2+) binding. Residue C81 participates in Zn(2+) binding. Positions 82 and 84 each coordinate Mg(2+). C97 and C104 together coordinate Zn(2+).

It belongs to the PRA-CH family. As to quaternary structure, homodimer. It depends on Mg(2+) as a cofactor. The cofactor is Zn(2+).

The protein resides in the cytoplasm. The enzyme catalyses 1-(5-phospho-beta-D-ribosyl)-5'-AMP + H2O = 1-(5-phospho-beta-D-ribosyl)-5-[(5-phospho-beta-D-ribosylamino)methylideneamino]imidazole-4-carboxamide. Its pathway is amino-acid biosynthesis; L-histidine biosynthesis; L-histidine from 5-phospho-alpha-D-ribose 1-diphosphate: step 3/9. Functionally, catalyzes the hydrolysis of the adenine ring of phosphoribosyl-AMP. This is Phosphoribosyl-AMP cyclohydrolase from Mycolicibacterium gilvum (strain PYR-GCK) (Mycobacterium gilvum (strain PYR-GCK)).